We begin with the raw amino-acid sequence, 200 residues long: Transcription elongation factor A protein-like 6 (200 aa).

A disordered region spans residues 1–200 (MEKPYNKNEG…QRGLHDIPYL (200 aa)). Residues 20-36 (DEVEPDDEGKSDEEEKP) show a composition bias toward acidic residues. Ser30 carries the phosphoserine modification. Basic and acidic residues-rich tracts occupy residues 37–52 (DAEG…KAEG), 60–80 (LEDK…KPQG), and 115–154 (DRGT…EELR). Residue Ser65 is modified to Phosphoserine.

The protein belongs to the TFS-II family. TFA subfamily.

The protein resides in the nucleus. May be involved in transcriptional regulation. The sequence is that of Transcription elongation factor A protein-like 6 (TCEAL6) from Homo sapiens (Human).